Here is a 308-residue protein sequence, read N- to C-terminus: Glycine--tRNA ligase alpha subunit (308 aa).

The protein belongs to the class-II aminoacyl-tRNA synthetase family. As to quaternary structure, tetramer of two alpha and two beta subunits.

The protein localises to the cytoplasm. The catalysed reaction is tRNA(Gly) + glycine + ATP = glycyl-tRNA(Gly) + AMP + diphosphate. The polypeptide is Glycine--tRNA ligase alpha subunit (Brucella abortus (strain 2308)).